Consider the following 596-residue polypeptide: Clathrin heavy chain linker domain-containing protein 1 (596 aa).

A coiled-coil region spans residues 129 to 241; the sequence is QLEAKMRIIE…RDIAENLKKD (113 aa).

This chain is Clathrin heavy chain linker domain-containing protein 1 (Clhc1), found in Mus musculus (Mouse).